Here is a 229-residue protein sequence, read N- to C-terminus: Acidic leucine-rich nuclear phosphoprotein 32-related protein 1 (229 aa).

LRR repeat units follow at residues 19–40, 42–63, 64–85, and 90–110; these read TVDTLFLDNAEDGQIGGLTDQL, NLEMLSMVKCGLTTLAGFPTLP, ALTYLDISDNQLGDNASFDVLV, and DLKKITLASNKLSLDNLRCLK. Residues 124–164 form the LRRCT domain; the sequence is PSLGLLEDYREKMFEMIPSLKILDGCDVDGEEVEEEFAGEG. Residues 155–177 are compositionally biased toward acidic residues; that stretch reads EVEEEFAGEGGEDSEEGSGDEDG. The tract at residues 155–229 is disordered; the sequence is EVEEEFAGEG…DNKKAAGDDE (75 aa). A compositionally biased stretch (basic and acidic residues) spans 219 to 229; sequence PDNKKAAGDDE.

It belongs to the ANP32 family.

This Caenorhabditis elegans protein is Acidic leucine-rich nuclear phosphoprotein 32-related protein 1.